The sequence spans 81 residues: uncharacterized protein (81 aa).

This is an uncharacterized protein from Caenorhabditis elegans.